Here is a 395-residue protein sequence, read N- to C-terminus: Elongation factor Tu (395 aa).

In terms of domain architecture, tr-type G spans 10 to 204; that stretch reads KTHANIGTIG…AVDEYIPTPE (195 aa). The G1 stretch occupies residues 19-26; the sequence is GHVDHGKT. 19–26 is a GTP binding site; that stretch reads GHVDHGKT. Mg(2+) is bound at residue Thr26. Residues 60-64 form a G2 region; that stretch reads GITIN. The tract at residues 81-84 is G3; that stretch reads DCPG. GTP contacts are provided by residues 81-85 and 136-139; these read DCPGH and NKVD. A G4 region spans residues 136 to 139; sequence NKVD. Positions 174–176 are G5; it reads SAL.

The protein belongs to the TRAFAC class translation factor GTPase superfamily. Classic translation factor GTPase family. EF-Tu/EF-1A subfamily. Monomer.

The protein localises to the cytoplasm. It carries out the reaction GTP + H2O = GDP + phosphate + H(+). GTP hydrolase that promotes the GTP-dependent binding of aminoacyl-tRNA to the A-site of ribosomes during protein biosynthesis. This chain is Elongation factor Tu, found in Macrococcus caseolyticus (strain JCSC5402) (Macrococcoides caseolyticum).